The chain runs to 309 residues: Porphobilinogen deaminase (309 aa).

Cys-241 carries the post-translational modification S-(dipyrrolylmethanemethyl)cysteine.

Belongs to the HMBS family. Monomer. Requires dipyrromethane as cofactor.

It carries out the reaction 4 porphobilinogen + H2O = hydroxymethylbilane + 4 NH4(+). Its pathway is porphyrin-containing compound metabolism; protoporphyrin-IX biosynthesis; coproporphyrinogen-III from 5-aminolevulinate: step 2/4. In terms of biological role, tetrapolymerization of the monopyrrole PBG into the hydroxymethylbilane pre-uroporphyrinogen in several discrete steps. In Bacillus cereus (strain AH820), this protein is Porphobilinogen deaminase.